Consider the following 122-residue polypeptide: Basic phospholipase A2 homolog myotoxin II (122 aa).

7 disulfides stabilise this stretch: Cys-26–Cys-116, Cys-28–Cys-44, Cys-43–Cys-95, Cys-49–Cys-122, Cys-50–Cys-88, Cys-57–Cys-81, and Cys-75–Cys-86. An important for membrane-damaging activities in eukaryotes and bacteria; heparin-binding region spans residues Lys-105–Lys-118.

This sequence belongs to the phospholipase A2 family. Group II subfamily. K49 sub-subfamily. Homodimer; non-covalently linked (probable alternative/compact dimer conformation). As to expression, expressed by the venom gland.

The protein localises to the secreted. Its activity is regulated as follows. Myotoxic activity is inhibited by suramin and rosmarinic acid. Cytotoxic and myotoxic activities are inhibited by pre-incubation with varespladib. Suramin inhibits this myotoxin by (i) direct blockage of the MDoS and MDiS, preventing the toxin/membrane interaction and disruption and (ii) formation of an oligomeric complex, resulting in a tetrameric configuration for which both MDoS and MDiS becomes physically inaccessible, thus avoiding any possibility of toxin-membrane interaction or disruption. Heparin completely inhibits the cytotoxic and bactericidal activities, but only partially the myotoxic, edema-inducing and lethal effects. Functionally, snake venom phospholipase A2 (PLA2) homolog that lacks enzymatic activity. Shows high myotoxin activities. Also shows neurotoxicity, since it induces muscle paralysis when tested on mouse phrenic-diaphragm preparations. Displays edema-inducing activities. Also displays antimicrobial activity against E.coli and C.albicans, as well as antitumoral activity against some human and mice cell lines. In addition, it is effective as parasiticidal agent against Leishmania sp. and S.mansoni. It also disrupts negatively charged liposomes in a dose- and temperature-dependent manner and shows toxicity by intraperitoneal route. In contrast to other phospholipase A2-like toxins, this myotoxin does not require fatty acid binding to be active. The protein is Basic phospholipase A2 homolog myotoxin II of Bothrops moojeni (Lance-headed viper).